The primary structure comprises 691 residues: Choline transporter-like 1 (691 aa).

Residues 1-10 (MGCAESKDGE) show a composition bias toward basic and acidic residues. Residues 1-20 (MGCAESKDGEGEAQNNRPKY) are disordered. The next 3 membrane-spanning stretches (helical) occupy residues 28 to 48 (WLAIYIIFWLFLIVIAIFSFV), 205 to 225 (WHIIAMVCGLALLISIALVTM), and 232 to 252 (IVSWIICVLVIVASVALTVAL). The N-linked (GlcNAc...) asparagine glycan is linked to Asn-261. The next 2 membrane-spanning stretches (helical) occupy residues 282-302 (VLTLAVLATITMIILIVVIYF) and 332-352 (LLAFLVLIAFLSFWVAVIICL). N-linked (GlcNAc...) asparagine glycosylation occurs at Asn-385. 4 helical membrane passes run 408-428 (SMFWIYVVGLIWTVEFIFACQ), 527-547 (VVAIESINFCPAAGIAWNAMA), 562-582 (FILFLGKVVVAALSGLIGIVL), and 591-611 (FYMAPVIIIIIFSFFIAHIIL).

This sequence belongs to the CTL (choline transporter-like) family.

It localises to the membrane. This is Choline transporter-like 1 from Drosophila melanogaster (Fruit fly).